The following is a 158-amino-acid chain: 2-C-methyl-D-erythritol 2,4-cyclodiphosphate synthase (158 aa).

A divalent metal cation-binding residues include Asp9 and His11. 4-CDP-2-C-methyl-D-erythritol 2-phosphate-binding positions include 9–11 (DVH) and 35–36 (HS). Position 43 (His43) interacts with a divalent metal cation. 4-CDP-2-C-methyl-D-erythritol 2-phosphate-binding positions include 57 to 59 (DIG), 62 to 66 (FPDTD), 101 to 107 (AQKPKMA), 133 to 136 (TTTE), Phe140, and Arg143.

This sequence belongs to the IspF family. As to quaternary structure, homotrimer. The cofactor is a divalent metal cation.

It catalyses the reaction 4-CDP-2-C-methyl-D-erythritol 2-phosphate = 2-C-methyl-D-erythritol 2,4-cyclic diphosphate + CMP. The protein operates within isoprenoid biosynthesis; isopentenyl diphosphate biosynthesis via DXP pathway; isopentenyl diphosphate from 1-deoxy-D-xylulose 5-phosphate: step 4/6. In terms of biological role, involved in the biosynthesis of isopentenyl diphosphate (IPP) and dimethylallyl diphosphate (DMAPP), two major building blocks of isoprenoid compounds. Catalyzes the conversion of 4-diphosphocytidyl-2-C-methyl-D-erythritol 2-phosphate (CDP-ME2P) to 2-C-methyl-D-erythritol 2,4-cyclodiphosphate (ME-CPP) with a corresponding release of cytidine 5-monophosphate (CMP). This chain is 2-C-methyl-D-erythritol 2,4-cyclodiphosphate synthase, found in Bacillus licheniformis (strain ATCC 14580 / DSM 13 / JCM 2505 / CCUG 7422 / NBRC 12200 / NCIMB 9375 / NCTC 10341 / NRRL NRS-1264 / Gibson 46).